The following is a 326-amino-acid chain: UDP-3-O-acylglucosamine N-acyltransferase (326 aa).

The Proton acceptor role is filled by His225.

Belongs to the transferase hexapeptide repeat family. LpxD subfamily. In terms of assembly, homotrimer.

The catalysed reaction is a UDP-3-O-[(3R)-3-hydroxyacyl]-alpha-D-glucosamine + a (3R)-hydroxyacyl-[ACP] = a UDP-2-N,3-O-bis[(3R)-3-hydroxyacyl]-alpha-D-glucosamine + holo-[ACP] + H(+). It participates in bacterial outer membrane biogenesis; LPS lipid A biosynthesis. Functionally, catalyzes the N-acylation of UDP-3-O-acylglucosamine using 3-hydroxyacyl-ACP as the acyl donor. Is involved in the biosynthesis of lipid A, a phosphorylated glycolipid that anchors the lipopolysaccharide to the outer membrane of the cell. The sequence is that of UDP-3-O-acylglucosamine N-acyltransferase from Acidovorax ebreus (strain TPSY) (Diaphorobacter sp. (strain TPSY)).